Reading from the N-terminus, the 98-residue chain is Small ribosomal subunit protein uS17 (98 aa).

It belongs to the universal ribosomal protein uS17 family. In terms of assembly, part of the 30S ribosomal subunit.

In terms of biological role, one of the primary rRNA binding proteins, it binds specifically to the 5'-end of 16S ribosomal RNA. The sequence is that of Small ribosomal subunit protein uS17 from Synechococcus sp. (strain CC9605).